The chain runs to 298 residues: Glutamyl-Q tRNA(Asp) synthetase (298 aa).

Residues 8–12 (RFAPS) and E44 each bind L-glutamate. The 'HIGH' region motif lies at 11–21 (PSPTGPLHFGS). C100, C102, Y123, and C127 together coordinate Zn(2+). Y183 and R201 together coordinate L-glutamate. A 'KMSKS' region motif is present at residues 239–243 (KLSKQ). Residue K242 participates in ATP binding.

Belongs to the class-I aminoacyl-tRNA synthetase family. GluQ subfamily. The cofactor is Zn(2+).

Its function is as follows. Catalyzes the tRNA-independent activation of glutamate in presence of ATP and the subsequent transfer of glutamate onto a tRNA(Asp). Glutamate is transferred on the 2-amino-5-(4,5-dihydroxy-2-cyclopenten-1-yl) moiety of the queuosine in the wobble position of the QUC anticodon. The chain is Glutamyl-Q tRNA(Asp) synthetase from Burkholderia orbicola (strain AU 1054).